Here is a 243-residue protein sequence, read N- to C-terminus: Leucyl/phenylalanyl-tRNA--protein transferase (243 aa).

Belongs to the L/F-transferase family.

Its subcellular location is the cytoplasm. It catalyses the reaction N-terminal L-lysyl-[protein] + L-leucyl-tRNA(Leu) = N-terminal L-leucyl-L-lysyl-[protein] + tRNA(Leu) + H(+). It carries out the reaction N-terminal L-arginyl-[protein] + L-leucyl-tRNA(Leu) = N-terminal L-leucyl-L-arginyl-[protein] + tRNA(Leu) + H(+). The catalysed reaction is L-phenylalanyl-tRNA(Phe) + an N-terminal L-alpha-aminoacyl-[protein] = an N-terminal L-phenylalanyl-L-alpha-aminoacyl-[protein] + tRNA(Phe). Functionally, functions in the N-end rule pathway of protein degradation where it conjugates Leu, Phe and, less efficiently, Met from aminoacyl-tRNAs to the N-termini of proteins containing an N-terminal arginine or lysine. The chain is Leucyl/phenylalanyl-tRNA--protein transferase from Saccharophagus degradans (strain 2-40 / ATCC 43961 / DSM 17024).